We begin with the raw amino-acid sequence, 154 residues long: Myoglobin (154 aa).

The Globin domain occupies 2–148 (GLSDQEWQQV…FRNDMASKYK (147 aa)). Nitrite is bound at residue H65. An O2-binding site is contributed by H65. Heme b is bound at residue H94.

Belongs to the globin family. Monomeric.

It localises to the cytoplasm. The protein localises to the sarcoplasm. The enzyme catalyses Fe(III)-heme b-[protein] + nitric oxide + H2O = Fe(II)-heme b-[protein] + nitrite + 2 H(+). The catalysed reaction is H2O2 + AH2 = A + 2 H2O. Its function is as follows. Monomeric heme protein which primary function is to store oxygen and facilitate its diffusion within muscle tissues. Reversibly binds oxygen through a pentacoordinated heme iron and enables its timely and efficient release as needed during periods of heightened demand. Depending on the oxidative conditions of tissues and cells, and in addition to its ability to bind oxygen, it also has a nitrite reductase activity whereby it regulates the production of bioactive nitric oxide. Under stress conditions, like hypoxia and anoxia, it also protects cells against reactive oxygen species thanks to its pseudoperoxidase activity. This is Myoglobin (MB) from Aethia pygmaea (Whiskered auklet).